The sequence spans 567 residues: WD repeat-containing protein 20 (567 aa).

Ala2 carries the post-translational modification N-acetylalanine. WD repeat units lie at residues Ile147 to Ala187, Val216 to Lys257, Ser258 to Arg297, and Ser345 to His389. Ser355 and Ser358 each carry phosphoserine. The segment at Pro408 to Ala441 is disordered. Composition is skewed to polar residues over residues Ser411–Asn421 and Arg429–Ala441. Phosphoserine occurs at positions 430, 432, and 463. Over residues Lys468–Ser481 the composition is skewed to basic residues. The interval Lys468–Leu493 is disordered. The stretch at Ile529–Gln566 is one WD 5 repeat.

In terms of assembly, interacts with USP12; promotes translocation of USP12/WDR20 to the plasma membrane. Component of the USP12/WDR20/WDR48 deubiquitinating complex. Interacts with USP46; contributes to the cytoplasmic localization of the USP46/WDR20 complex. Component of the USP12/DMWD/WDR48 deubiquitinating complex.

It localises to the cytoplasm. The protein localises to the nucleus. Regulator of deubiquitinating complexes. Activates deubiquitinating activity of complexes containing USP12. Anchors at the base of the ubiquitin-contacting loop of USP12 and remotely modulates the catalytic center of the enzyme. Regulates shuttling of complexes containing USP12 between the plasma membrane, cytoplasm and nucleus. The sequence is that of WD repeat-containing protein 20 (Wdr20) from Mus musculus (Mouse).